Consider the following 601-residue polypeptide: Probable translation initiation factor IF-2 (601 aa).

The region spanning 14 to 229 (LRTPIVAVLG…VMMGLSQRYM (216 aa)) is the tr-type G domain. Residues 23–30 (GHVDHGKT) are G1. GTP is bound at residue 23-30 (GHVDHGKT). The segment at 48 to 52 (AITQH) is G2. Positions 85–88 (DTPG) are G3. Residues 85 to 89 (DTPGH) and 139 to 142 (NKID) each bind GTP. The tract at residues 139–142 (NKID) is G4. The tract at residues 207 to 209 (SAE) is G5.

This sequence belongs to the TRAFAC class translation factor GTPase superfamily. Classic translation factor GTPase family. IF-2 subfamily.

Functionally, function in general translation initiation by promoting the binding of the formylmethionine-tRNA to ribosomes. Seems to function along with eIF-2. The protein is Probable translation initiation factor IF-2 of Haloarcula marismortui (strain ATCC 43049 / DSM 3752 / JCM 8966 / VKM B-1809) (Halobacterium marismortui).